The chain runs to 173 residues: Microfibrillar-associated protein 5 (173 aa).

The signal sequence occupies residues methionine 1–tryptophan 21. Positions arginine 30–aspartate 32 match the Cell attachment site motif. O-linked (GalNAc...) threonine glycosylation occurs at threonine 54. A glycan (N-linked (GlcNAc...) asparagine) is linked at asparagine 79.

This sequence belongs to the MFAP family. In terms of assembly, interacts with TGFB2. Interacts with BMP2. Interacts with FBN1 (via N-terminal domain) and FBN2. Forms intermolecular disulfide bonds either with other MAGP-2 molecules or with other components of the microfibrils. In terms of processing, N- and O-glycosylated. O-glycosylated with core 1 or possibly core 8 glycans. O-glycan heterogeneity at Thr-54: HexHexNAc (major) and HexHexNAc + sulfate (minor).

Its subcellular location is the secreted. The protein localises to the extracellular space. It is found in the extracellular matrix. Its function is as follows. May play a role in hematopoiesis. In the cardiovascular system, could regulate growth factors or participate in cell signaling in maintaining large vessel integrity. Component of the elastin-associated microfibrils. The polypeptide is Microfibrillar-associated protein 5 (MFAP5) (Homo sapiens (Human)).